The chain runs to 504 residues: MKLLEQIEKWAAETPDQTAFVWRDAKITYKQLKEDSDALAHWISSEYPDDRSPIMVYGHMQPEMIINFLGCVKAGHAYIPVDLSIPADRVQRIAENSGAKLLLSATAVTVTDLPVRIVSEDNLKDIFFTHKGNTPNPEHAVKGDENFYIIYTSGSTGNPKGVQITYNCLVSFTKWAVEDFNLQTGQVFLNQAPFSFDLSVMDIYPSLVTGGTLWAIDKDMIARPKDLFASLEQSDIQVWTSTPSFAEMCLMEASFSESMLPNMKTFLFCGEVLPNEVARKLIERFPKATIMNTYGPTEATVAVTGIHVTEEVLDQYKSLPVGYCKSDCRLLIMKEDGTIAPDGEKGEIVIVGPSVSVGYLGSPELTEKAFTMIDGERAYKTGDAGYVENGLLFYNGRLDFQIKLHGYRMELEEIEHHLRACSYVEGAVIVPIKKGEKYDYLLAVVVPGEHSFEKEFKLTSAIKKELNERLPNYMIPRKFMYQSSIPMTPNGKVDRKKLLSEVTA.

T152 to S153 lines the ATP pocket. Residue D197 coordinates D-alanine. Residue N292 to T297 coordinates ATP. V301 is a D-alanine binding site. Residues D383, Y394–R397, and K492 each bind ATP. A D-alanine-binding site is contributed by K492.

It belongs to the ATP-dependent AMP-binding enzyme family. DltA subfamily.

The protein resides in the cytoplasm. It carries out the reaction holo-[D-alanyl-carrier protein] + D-alanine + ATP = D-alanyl-[D-alanyl-carrier protein] + AMP + diphosphate. It functions in the pathway cell wall biogenesis; lipoteichoic acid biosynthesis. Catalyzes the first step in the D-alanylation of lipoteichoic acid (LTA), the activation of D-alanine and its transfer onto the D-alanyl carrier protein (Dcp) DltC. In an ATP-dependent two-step reaction, forms a high energy D-alanyl-AMP intermediate, followed by transfer of the D-alanyl residue as a thiol ester to the phosphopantheinyl prosthetic group of the Dcp. D-alanylation of LTA plays an important role in modulating the properties of the cell wall in Gram-positive bacteria, influencing the net charge of the cell wall. This Bacillus cereus (strain B4264) protein is D-alanine--D-alanyl carrier protein ligase.